The primary structure comprises 147 residues: Large ribosomal subunit protein uL13 (147 aa).

Belongs to the universal ribosomal protein uL13 family. Part of the 50S ribosomal subunit.

This protein is one of the early assembly proteins of the 50S ribosomal subunit, although it is not seen to bind rRNA by itself. It is important during the early stages of 50S assembly. The polypeptide is Large ribosomal subunit protein uL13 (Mycolicibacterium gilvum (strain PYR-GCK) (Mycobacterium gilvum (strain PYR-GCK))).